Consider the following 202-residue polypeptide: Translation initiation factor IF-3 (202 aa).

Belongs to the IF-3 family. Monomer.

It is found in the cytoplasm. Functionally, IF-3 binds to the 30S ribosomal subunit and shifts the equilibrium between 70S ribosomes and their 50S and 30S subunits in favor of the free subunits, thus enhancing the availability of 30S subunits on which protein synthesis initiation begins. This chain is Translation initiation factor IF-3, found in Prochlorococcus marinus (strain NATL2A).